We begin with the raw amino-acid sequence, 88 residues long: Small ribosomal subunit protein uS15 (88 aa).

The protein belongs to the universal ribosomal protein uS15 family. In terms of assembly, part of the 30S ribosomal subunit. Forms a bridge to the 50S subunit in the 70S ribosome, contacting the 23S rRNA.

Its function is as follows. One of the primary rRNA binding proteins, it binds directly to 16S rRNA where it helps nucleate assembly of the platform of the 30S subunit by binding and bridging several RNA helices of the 16S rRNA. Forms an intersubunit bridge (bridge B4) with the 23S rRNA of the 50S subunit in the ribosome. This chain is Small ribosomal subunit protein uS15, found in Leptospira interrogans serogroup Icterohaemorrhagiae serovar copenhageni (strain Fiocruz L1-130).